Reading from the N-terminus, the 389-residue chain is S-adenosylmethionine synthase (389 aa).

Histidine 17 is a binding site for ATP. A Mg(2+)-binding site is contributed by aspartate 19. Glutamate 45 is a K(+) binding site. L-methionine-binding residues include glutamate 58 and glutamine 101. The segment at 101 to 111 is flexible loop; sequence QSPDIAQGVTE. ATP contacts are provided by residues 168–170, 234–235, aspartate 243, 249–250, alanine 266, and lysine 270; these read DSK, RF, and RK. Aspartate 243 lines the L-methionine pocket. An L-methionine-binding site is contributed by lysine 274.

It belongs to the AdoMet synthase family. Homotetramer; dimer of dimers. Requires Mg(2+) as cofactor. K(+) is required as a cofactor.

The protein resides in the cytoplasm. It carries out the reaction L-methionine + ATP + H2O = S-adenosyl-L-methionine + phosphate + diphosphate. It participates in amino-acid biosynthesis; S-adenosyl-L-methionine biosynthesis; S-adenosyl-L-methionine from L-methionine: step 1/1. Its function is as follows. Catalyzes the formation of S-adenosylmethionine (AdoMet) from methionine and ATP. The overall synthetic reaction is composed of two sequential steps, AdoMet formation and the subsequent tripolyphosphate hydrolysis which occurs prior to release of AdoMet from the enzyme. The chain is S-adenosylmethionine synthase from Geotalea uraniireducens (strain Rf4) (Geobacter uraniireducens).